Consider the following 132-residue polypeptide: Ig kappa chain V-III region MOPC 321 (132 aa).

Positions 1–20 are cleaved as a signal peptide; that stretch reads METDTLLLWVLLLWVPGSTG. Positions 21-43 are framework-1; that stretch reads DIVLTQSPASLAVSLGQRATISC. A disulfide bridge links C43 with C112. Residues 44–58 are complementarity-determining-1; it reads RASKSVNTYGNSFMZ. The segment at 59-73 is framework-2; the sequence is WYZZKPGZPPKLLIY. The interval 74–80 is complementarity-determining-2; it reads RASNLZS. The segment at 81 to 112 is framework-3; sequence GIPARFSGSGSRTBFTLTIBPVZABDVATYFC. Residues 113–121 are complementarity-determining-3; that stretch reads ZZSBZBPWT. The framework-4 stretch occupies residues 122 to 131; sequence FGSGTKLEIK.

The protein is Ig kappa chain V-III region MOPC 321 of Mus musculus (Mouse).